A 341-amino-acid polypeptide reads, in one-letter code: Ketol-acid reductoisomerase (NADP(+)) (341 aa).

The 182-residue stretch at 1 to 182 (MTELFYDDDA…GGTRAGVIKT (182 aa)) folds into the KARI N-terminal Rossmann domain. NADP(+) contacts are provided by residues 25–28 (YGSQ), serine 51, serine 53, and 83–86 (DQVQ). Residue histidine 108 is part of the active site. Glycine 134 lines the NADP(+) pocket. Residues 183-328 (TFTEETETDL…RELRKLFSWI (146 aa)) enclose the KARI C-terminal knotted domain. Mg(2+) is bound by residues aspartate 191, glutamate 195, glutamate 227, and glutamate 231. Substrate is bound at residue serine 252.

It belongs to the ketol-acid reductoisomerase family. It depends on Mg(2+) as a cofactor.

It catalyses the reaction (2R)-2,3-dihydroxy-3-methylbutanoate + NADP(+) = (2S)-2-acetolactate + NADPH + H(+). It carries out the reaction (2R,3R)-2,3-dihydroxy-3-methylpentanoate + NADP(+) = (S)-2-ethyl-2-hydroxy-3-oxobutanoate + NADPH + H(+). Its pathway is amino-acid biosynthesis; L-isoleucine biosynthesis; L-isoleucine from 2-oxobutanoate: step 2/4. It functions in the pathway amino-acid biosynthesis; L-valine biosynthesis; L-valine from pyruvate: step 2/4. Involved in the biosynthesis of branched-chain amino acids (BCAA). Catalyzes an alkyl-migration followed by a ketol-acid reduction of (S)-2-acetolactate (S2AL) to yield (R)-2,3-dihydroxy-isovalerate. In the isomerase reaction, S2AL is rearranged via a Mg-dependent methyl migration to produce 3-hydroxy-3-methyl-2-ketobutyrate (HMKB). In the reductase reaction, this 2-ketoacid undergoes a metal-dependent reduction by NADPH to yield (R)-2,3-dihydroxy-isovalerate. In Renibacterium salmoninarum (strain ATCC 33209 / DSM 20767 / JCM 11484 / NBRC 15589 / NCIMB 2235), this protein is Ketol-acid reductoisomerase (NADP(+)).